Consider the following 312-residue polypeptide: Phospholipid phosphatase 3 (312 aa).

The Cytoplasmic portion of the chain corresponds to 1-33 (MQSYKYDKAIVPESKNGGSPALNNNPRKGGSKR). S19 bears the Phosphoserine mark. A helical membrane pass occupies residues 34 to 54 (VLLICLDLFCLFMAALPFLII). Residues 55–85 (ETSTIKPYRRGFYCNDESIKYPLKVSETIND) are Extracellular-facing. Residues 86–106 (AVLCAVGIVIAILAIITGEFY) form a helical membrane-spanning segment. The Cytoplasmic segment spans residues 107–123 (RIYYLKEKSRSTTQNPY). Positions 109-110 (YY) match the Dityrosine basolateral targeting motif motif. Residues 124 to 144 (VAALYKQVGCFLFGCAISQSF) traverse the membrane as a helical segment. Over 145-194 (TDIAKVSIGRLRPHFLSVCDPDFSQINCSEGYIQNYRCRGEDSKVQEARK) the chain is Extracellular. The tract at residues 149–157 (KVSIGRLRP) is phosphatase sequence motif I. A glycan (N-linked (GlcNAc...) asparagine) is linked at N171. An Integrin-binding motif motif is present at residues 183–185 (RGE). The chain crosses the membrane as a helical span at residues 195–215 (SFFSGHASFSMFTMLYLVLYL). The tract at residues 197 to 200 (FSGH) is phosphatase sequence motif II. H200 (proton donors) is an active-site residue. The Cytoplasmic portion of the chain corresponds to 216-226 (QARFTWRGARL). Residues 227–244 (LRPLLQFTLLMMAFYTGL) traverse the membrane as a helical segment. The tract at residues 245–256 (SRVSDYKHHPSD) is phosphatase sequence motif III. Topologically, residues 245 to 258 (SRVSDYKHHPSDVL) are extracellular. H252 functions as the Nucleophile in the catalytic mechanism. A helical transmembrane segment spans residues 259 to 279 (AGFAQGALVACCIVFFVSDLF). A mediates interaction with CTNND1 region spans residues 276–312 (SDLFKTKTSLSLPAPAIRREILSPVDIIDRNNHHNMV). Over 280 to 312 (KTKTSLSLPAPAIRREILSPVDIIDRNNHHNMV) the chain is Cytoplasmic.

Belongs to the PA-phosphatase related phosphoesterase family. Forms functional homodimers and homooligomers that are not required for substrate recognition and catalytic activity. Can also form heterooligomers with other PLPP2 and PLPP3. Interacts with CTNND1; negatively regulates the PLPP3-mediated stabilization of beta-catenin/CTNNB1. In terms of processing, N-glycosylated. Contains high-mannose oligosaccharides. In terms of tissue distribution, detected in lung, cerebellum and heart atrium.

It localises to the cell membrane. Its subcellular location is the basolateral cell membrane. The protein resides in the endoplasmic reticulum membrane. It is found in the endoplasmic reticulum-Golgi intermediate compartment membrane. The protein localises to the golgi apparatus membrane. It localises to the golgi apparatus. Its subcellular location is the trans-Golgi network membrane. The protein resides in the membrane raft. The enzyme catalyses a 1,2-diacyl-sn-glycero-3-phosphate + H2O = a 1,2-diacyl-sn-glycerol + phosphate. The catalysed reaction is 1,2-dihexadecanoyl-sn-glycero-3-phosphate + H2O = 1,2-dihexadecanoyl-sn-glycerol + phosphate. It carries out the reaction 1,2-di-(9Z-octadecenoyl)-sn-glycero-3-phosphate + H2O = 1,2-di-(9Z-octadecenoyl)-sn-glycerol + phosphate. It catalyses the reaction a monoacyl-sn-glycero-3-phosphate + H2O = a monoacylglycerol + phosphate. The enzyme catalyses (9Z)-octadecenoyl-sn-glycero-3-phosphate + H2O = (9Z-octadecenoyl)-glycerol + phosphate. The catalysed reaction is sphing-4-enine 1-phosphate + H2O = sphing-4-enine + phosphate. It carries out the reaction an N-acylsphing-4-enine 1-phosphate + H2O = an N-acylsphing-4-enine + phosphate. It catalyses the reaction N-(octanoyl)-sphing-4-enine-1-phosphate + H2O = N-octanoylsphing-4-enine + phosphate. The enzyme catalyses N-(9Z-octadecenoyl)-ethanolamine phosphate + H2O = N-(9Z-octadecenoyl) ethanolamine + phosphate. It functions in the pathway lipid metabolism; phospholipid metabolism. With respect to regulation, magnesium-independent phospholipid phosphatase. Insensitive to N-ethylmaleimide. Magnesium-independent phospholipid phosphatase of the plasma membrane that catalyzes the dephosphorylation of a variety of glycerolipid and sphingolipid phosphate esters including phosphatidate/PA, lysophosphatidate/LPA, diacylglycerol pyrophosphate/DGPP, sphingosine 1-phosphate/S1P and ceramide 1-phosphate/C1P. Also acts on N-oleoyl ethanolamine phosphate/N-(9Z-octadecenoyl)-ethanolamine phosphate, a potential physiological compound. Has both an extracellular and an intracellular phosphatase activity, allowing the hydrolysis and the cellular uptake of these bioactive lipid mediators from the milieu, regulating signal transduction in different cellular processes. Through the dephosphorylation of extracellular sphingosine-1-phosphate and the regulation of its extra- and intracellular availability, plays a role in vascular homeostasis, regulating endothelial cell migration, adhesion, survival, proliferation and the production of pro-inflammatory cytokines. By maintaining the appropriate levels of this lipid in the cerebellum, also ensure its proper development and function. Through its intracellular lipid phosphatase activity may act in early compartments of the secretory pathway, regulating the formation of Golgi to endoplasmic reticulum retrograde transport carriers. Its function is as follows. Independently of this phosphatase activity may also function in the Wnt signaling pathway and the stabilization of beta-catenin/CTNNB1, thereby regulating cell proliferation, migration and differentiation in angiogenesis or yet in tumor growth. Also plays a role in integrin-mediated cell-cell adhesion in angiogenesis. The protein is Phospholipid phosphatase 3 of Mus musculus (Mouse).